Consider the following 461-residue polypeptide: Glycine--tRNA ligase (461 aa).

The substrate site is built by arginine 99 and glutamate 173. ATP-binding positions include 205–207 (RNE), 215–220 (FRTREF), 289–290 (EL), and 333–336 (GADR). A substrate-binding site is contributed by 220–224 (FEQME). 329–333 (EPSLG) is a substrate binding site.

It belongs to the class-II aminoacyl-tRNA synthetase family. As to quaternary structure, homodimer.

It localises to the cytoplasm. It catalyses the reaction tRNA(Gly) + glycine + ATP = glycyl-tRNA(Gly) + AMP + diphosphate. Catalyzes the attachment of glycine to tRNA(Gly). The polypeptide is Glycine--tRNA ligase (Lysinibacillus sphaericus (strain C3-41)).